A 340-amino-acid polypeptide reads, in one-letter code: Ketol-acid reductoisomerase (NADP(+)) (340 aa).

Residues 3–182 enclose the KARI N-terminal Rossmann domain; the sequence is VQMEYEKDVK…GAARVGLLET (180 aa). NADP(+) contacts are provided by residues 26–29, arginine 49, serine 53, and 83–86; these read YGSQ and DEIQ. Histidine 108 is a catalytic residue. Glycine 134 is an NADP(+) binding site. One can recognise a KARI C-terminal knotted domain in the interval 183–328; the sequence is TYKEETEEDL…AELRKAMPFV (146 aa). Mg(2+) is bound by residues aspartate 191, glutamate 195, glutamate 227, and glutamate 231. Serine 252 is a substrate binding site.

This sequence belongs to the ketol-acid reductoisomerase family. The cofactor is Mg(2+).

The enzyme catalyses (2R)-2,3-dihydroxy-3-methylbutanoate + NADP(+) = (2S)-2-acetolactate + NADPH + H(+). It catalyses the reaction (2R,3R)-2,3-dihydroxy-3-methylpentanoate + NADP(+) = (S)-2-ethyl-2-hydroxy-3-oxobutanoate + NADPH + H(+). Its pathway is amino-acid biosynthesis; L-isoleucine biosynthesis; L-isoleucine from 2-oxobutanoate: step 2/4. It participates in amino-acid biosynthesis; L-valine biosynthesis; L-valine from pyruvate: step 2/4. In terms of biological role, involved in the biosynthesis of branched-chain amino acids (BCAA). Catalyzes an alkyl-migration followed by a ketol-acid reduction of (S)-2-acetolactate (S2AL) to yield (R)-2,3-dihydroxy-isovalerate. In the isomerase reaction, S2AL is rearranged via a Mg-dependent methyl migration to produce 3-hydroxy-3-methyl-2-ketobutyrate (HMKB). In the reductase reaction, this 2-ketoacid undergoes a metal-dependent reduction by NADPH to yield (R)-2,3-dihydroxy-isovalerate. The polypeptide is Ketol-acid reductoisomerase (NADP(+)) (Streptococcus thermophilus (strain ATCC BAA-491 / LMD-9)).